Reading from the N-terminus, the 132-residue chain is Small ribosomal subunit protein uS8 (132 aa).

This sequence belongs to the universal ribosomal protein uS8 family. In terms of assembly, part of the 30S ribosomal subunit. Contacts proteins S5 and S12.

Its function is as follows. One of the primary rRNA binding proteins, it binds directly to 16S rRNA central domain where it helps coordinate assembly of the platform of the 30S subunit. The chain is Small ribosomal subunit protein uS8 from Bacillus anthracis (strain A0248).